A 492-amino-acid chain; its full sequence is UDP-glucosyl transferase 73DL1 (492 aa).

Catalysis depends on histidine 27, which acts as the Proton acceptor. Aspartate 131 acts as the Charge relay in catalysis. UDP is bound by residues tryptophan 352, valine 353, histidine 370, threonine 375, glutamate 378, and tyrosine 392.

It belongs to the UDP-glycosyltransferase family. As to expression, mainly expressed in flowers, flower buds and young leaves, and, to a lesser extent, in old leaves, stems and roots.

Its pathway is secondary metabolite biosynthesis; terpenoid biosynthesis. Component of the oleanane-type triterpene saponins (e.g. saponarioside A and saponarioside B) biosynthetic pathway, leading to the production of natural products with detergent properties used as traditional sources of soap. A glycosyltransferase that mediates the conversion of QA-mono to QA-di via the elongation of the C-3 sugar chain with a D-galactose. The protein is UDP-glucosyl transferase 73DL1 of Saponaria officinalis (Common soapwort).